The primary structure comprises 141 residues: Large ribosomal subunit protein uL11 (141 aa).

The protein belongs to the universal ribosomal protein uL11 family. In terms of assembly, part of the ribosomal stalk of the 50S ribosomal subunit. Interacts with L10 and the large rRNA to form the base of the stalk. L10 forms an elongated spine to which L12 dimers bind in a sequential fashion forming a multimeric L10(L12)X complex. One or more lysine residues are methylated.

In terms of biological role, forms part of the ribosomal stalk which helps the ribosome interact with GTP-bound translation factors. This is Large ribosomal subunit protein uL11 from Ligilactobacillus salivarius (strain UCC118) (Lactobacillus salivarius).